A 286-amino-acid polypeptide reads, in one-letter code: ATP synthase gamma chain (286 aa).

It belongs to the ATPase gamma chain family. As to quaternary structure, F-type ATPases have 2 components, CF(1) - the catalytic core - and CF(0) - the membrane proton channel. CF(1) has five subunits: alpha(3), beta(3), gamma(1), delta(1), epsilon(1). CF(0) has three main subunits: a, b and c.

The protein localises to the cell inner membrane. Produces ATP from ADP in the presence of a proton gradient across the membrane. The gamma chain is believed to be important in regulating ATPase activity and the flow of protons through the CF(0) complex. This chain is ATP synthase gamma chain, found in Shewanella denitrificans (strain OS217 / ATCC BAA-1090 / DSM 15013).